The chain runs to 310 residues: Proline iminopeptidase (310 aa).

Residues 33–290 (PVIFLHGGPG…RVVQAGHRAF (258 aa)) form the AB hydrolase-1 domain. Ser107 acts as the Nucleophile in catalysis. The active site involves Asp260. Residue His287 is the Proton donor of the active site.

The protein belongs to the peptidase S33 family.

The protein localises to the cytoplasm. It catalyses the reaction Release of N-terminal proline from a peptide.. In terms of biological role, specifically catalyzes the removal of N-terminal proline residues from peptides. This chain is Proline iminopeptidase (pip), found in Neisseria meningitidis serogroup B (strain ATCC BAA-335 / MC58).